Consider the following 372-residue polypeptide: Cytochrome b (372 aa).

The next 4 membrane-spanning stretches (helical) occupy residues 25–45, 69–90, 105–125, and 170–190; these read FGSM…FLAV, WMMQ…YIHM, WLSG…GYVL, and FFAL…LHIM. Heme b is bound by residues His75 and His89. His174 and His188 together coordinate heme b. An a ubiquinone-binding site is contributed by His193. A run of 4 helical transmembrane segments spans residues 218-238, 280-300, 312-332, and 339-358; these read YKDL…ISFL, LGGA…PFTH, FMQL…WTAT, and YTTI…MSNL.

The protein belongs to the cytochrome b family. As to quaternary structure, the cytochrome bc1 complex contains 3 respiratory subunits (MT-CYB, CYC1 and UQCRFS1), 2 core proteins (UQCRC1 and UQCRC2) and probably 6 low-molecular weight proteins. Heme b is required as a cofactor.

Its subcellular location is the mitochondrion inner membrane. Its function is as follows. Component of the ubiquinol-cytochrome c reductase complex (complex III or cytochrome b-c1 complex) that is part of the mitochondrial respiratory chain. The b-c1 complex mediates electron transfer from ubiquinol to cytochrome c. Contributes to the generation of a proton gradient across the mitochondrial membrane that is then used for ATP synthesis. This chain is Cytochrome b (MT-CYB), found in Sanzinia madagascariensis (Madagascar tree boa).